We begin with the raw amino-acid sequence, 314 residues long: Glycine--tRNA ligase alpha subunit (314 aa).

Belongs to the class-II aminoacyl-tRNA synthetase family. As to quaternary structure, tetramer of two alpha and two beta subunits.

The protein resides in the cytoplasm. It catalyses the reaction tRNA(Gly) + glycine + ATP = glycyl-tRNA(Gly) + AMP + diphosphate. The protein is Glycine--tRNA ligase alpha subunit of Mesorhizobium japonicum (strain LMG 29417 / CECT 9101 / MAFF 303099) (Mesorhizobium loti (strain MAFF 303099)).